We begin with the raw amino-acid sequence, 215 residues long: Proteasome subunit beta type-1 (215 aa).

An N-acetylmethionine modification is found at Met-1. A propeptide spans 1–19 (MNGIQVDINRLKKGEVSLG) (removed in mature form). Residue Thr-20 is the Nucleophile of the active site.

Belongs to the peptidase T1B family. In terms of assembly, the 26S proteasome consists of a 20S proteasome core and two 19S regulatory subunits. The 20S proteasome core is composed of 28 subunits that are arranged in four stacked rings, resulting in a barrel-shaped structure. The two end rings are each formed by seven alpha subunits, and the two central rings are each formed by seven beta subunits. The catalytic chamber with the active sites is on the inside of the barrel.

It is found in the cytoplasm. The protein resides in the nucleus. It catalyses the reaction Cleavage of peptide bonds with very broad specificity.. Functionally, the proteasome degrades poly-ubiquitinated proteins in the cytoplasm and in the nucleus. It is essential for the regulated turnover of proteins and for the removal of misfolded proteins. The proteasome is a multicatalytic proteinase complex that is characterized by its ability to cleave peptides with Arg, Phe, Tyr, Leu, and Glu adjacent to the leaving group at neutral or slightly basic pH. It has an ATP-dependent proteolytic activity. PRE3 and PRE4 are necessary for the peptidyl-glutamyl-peptide-hydrolyzing activity. In terms of biological role, this subunit is necessary for the peptidylglutamyl-peptide hydrolyzing activity. This chain is Proteasome subunit beta type-1 (PRE3), found in Saccharomyces cerevisiae (strain ATCC 204508 / S288c) (Baker's yeast).